A 441-amino-acid polypeptide reads, in one-letter code: Trigger factor (441 aa).

The PPIase FKBP-type domain maps to 161–246 (GDMVTVDFQG…VKDVKERILA (86 aa)).

Belongs to the FKBP-type PPIase family. Tig subfamily.

It localises to the cytoplasm. The catalysed reaction is [protein]-peptidylproline (omega=180) = [protein]-peptidylproline (omega=0). Involved in protein export. Acts as a chaperone by maintaining the newly synthesized protein in an open conformation. Functions as a peptidyl-prolyl cis-trans isomerase. This chain is Trigger factor, found in Desulfotalea psychrophila (strain LSv54 / DSM 12343).